The following is a 363-amino-acid chain: Trans-2,3-enoyl-CoA reductase-like (363 aa).

S37 is subject to Phosphoserine. 3 helical membrane-spanning segments follow: residues 143–163 (WTTV…LFYL), 217–237 (LIMS…YINH), and 311–331 (ISFT…LMSI).

Belongs to the steroid 5-alpha reductase family. Predominantly expressed in the heart and skeletal muscle.

Its subcellular location is the membrane. It is found in the endoplasmic reticulum. In Homo sapiens (Human), this protein is Trans-2,3-enoyl-CoA reductase-like (TECRL).